The sequence spans 1072 residues: Carbamoyl phosphate synthase large chain (1072 aa).

The segment at 1-401 is carboxyphosphate synthetic domain; that stretch reads MPKRLDINTI…SLLKAVRSLE (401 aa). R129, R169, G175, G176, K208, I210, E215, G241, V242, H243, Q284, and E298 together coordinate ATP. Residues 133–327 enclose the ATP-grasp 1 domain; it reads RTLMQELNEP…IAKLAAKIAV (195 aa). Residues Q284, E298, and N300 each contribute to the Mg(2+) site. Residues Q284, E298, and N300 each coordinate Mn(2+). The tract at residues 402–546 is oligomerization domain; that stretch reads LGVYHLELEH…YSTYGDENES (145 aa). Positions 547 to 929 are carbamoyl phosphate synthetic domain; sequence VRTDRKSVVV…ALYKGLVASG (383 aa). The ATP-grasp 2 domain occupies 671-861; the sequence is EAALTQLGIP…MANVATKVIL (191 aa). Positions 707, 746, 752, 777, 778, 779, 780, 820, and 832 each coordinate ATP. Mg(2+) is bound by residues Q820, E832, and N834. The Mn(2+) site is built by Q820, E832, and N834. The region spanning 930–1072 is the MGS-like domain; the sequence is INIPTHGSVI…QTKRHEVVHA (143 aa). Residues 930-1072 are allosteric domain; it reads INIPTHGSVI…QTKRHEVVHA (143 aa).

This sequence belongs to the CarB family. Composed of two chains; the small (or glutamine) chain promotes the hydrolysis of glutamine to ammonia, which is used by the large (or ammonia) chain to synthesize carbamoyl phosphate. Tetramer of heterodimers (alpha,beta)4. Mg(2+) is required as a cofactor. It depends on Mn(2+) as a cofactor.

It catalyses the reaction hydrogencarbonate + L-glutamine + 2 ATP + H2O = carbamoyl phosphate + L-glutamate + 2 ADP + phosphate + 2 H(+). The catalysed reaction is hydrogencarbonate + NH4(+) + 2 ATP = carbamoyl phosphate + 2 ADP + phosphate + 2 H(+). It participates in amino-acid biosynthesis; L-arginine biosynthesis; carbamoyl phosphate from bicarbonate: step 1/1. It functions in the pathway pyrimidine metabolism; UMP biosynthesis via de novo pathway; (S)-dihydroorotate from bicarbonate: step 1/3. In terms of biological role, large subunit of the glutamine-dependent carbamoyl phosphate synthetase (CPSase). CPSase catalyzes the formation of carbamoyl phosphate from the ammonia moiety of glutamine, carbonate, and phosphate donated by ATP, constituting the first step of 2 biosynthetic pathways, one leading to arginine and/or urea and the other to pyrimidine nucleotides. The large subunit (synthetase) binds the substrates ammonia (free or transferred from glutamine from the small subunit), hydrogencarbonate and ATP and carries out an ATP-coupled ligase reaction, activating hydrogencarbonate by forming carboxy phosphate which reacts with ammonia to form carbamoyl phosphate. The protein is Carbamoyl phosphate synthase large chain of Bacillus cereus (strain G9842).